Consider the following 346-residue polypeptide: Biotin synthase (346 aa).

Residues 38 to 256 form the Radical SAM core domain; sequence QQVQVSTLLS…IAVARIMMPT (219 aa). Residues C53, C57, and C60 each coordinate [4Fe-4S] cluster. Residues C97, C128, C188, and R260 each coordinate [2Fe-2S] cluster.

This sequence belongs to the radical SAM superfamily. Biotin synthase family. In terms of assembly, homodimer. [4Fe-4S] cluster serves as cofactor. The cofactor is [2Fe-2S] cluster.

It carries out the reaction (4R,5S)-dethiobiotin + (sulfur carrier)-SH + 2 reduced [2Fe-2S]-[ferredoxin] + 2 S-adenosyl-L-methionine = (sulfur carrier)-H + biotin + 2 5'-deoxyadenosine + 2 L-methionine + 2 oxidized [2Fe-2S]-[ferredoxin]. The protein operates within cofactor biosynthesis; biotin biosynthesis; biotin from 7,8-diaminononanoate: step 2/2. Catalyzes the conversion of dethiobiotin (DTB) to biotin by the insertion of a sulfur atom into dethiobiotin via a radical-based mechanism. The polypeptide is Biotin synthase (Salmonella dublin (strain CT_02021853)).